The chain runs to 630 residues: Sodium-dependent serotonin transporter (630 aa).

2 stretches are compositionally biased toward polar residues: residues 1–11 and 42–55; these read METTPLNSQKV and QISNGYSAVPSTSA. Residues 1-63 form a disordered region; sequence METTPLNSQK…SAGDEAPHST (63 aa). At 1–87 the chain is on the cytoplasmic side; the sequence is METTPLNSQK…ERETWGKKMD (87 aa). Position 47 is a phosphotyrosine (Y47). Residues 88 to 112 form a helical membrane-spanning segment; the sequence is FLLSVIGYAVDLGNIWRFPYICYQN. Residues G94, A96, V97, D98, and N101 each coordinate Na(+). D98 serves as a coordination point for serotonin. The Extracellular portion of the chain corresponds to 113-115; that stretch reads GGG. A helical transmembrane segment spans residues 116–135; sequence AFLLPYTIMAIFGGIPLFYM. At 136-160 the chain is on the cytoplasmic side; the sequence is ELALGQYHRNGCISIWKKICPIFKG. Position 142 is a phosphotyrosine (Y142). The helical transmembrane segment at 161–186 threads the bilayer; the sequence is IGYAICIIAFYIASYYNTIIAWALYY. The Extracellular portion of the chain corresponds to 187-252; sequence LISSFTDQLP…KGLQDLGTIS (66 aa). A disulfide bond links C200 and C209. Residues N208 and N217 are each glycosylated (N-linked (GlcNAc...) asparagine). Residues 253-271 traverse the membrane as a helical segment; sequence WQLALCIMLIFTIIYFSIW. Residues 272 to 277 are Cytoplasmic-facing; that stretch reads KGVKTS. At T276 the chain carries Phosphothreonine. A helical transmembrane segment spans residues 278–297; that stretch reads GKVVWVTATFPYIVLSVLLV. Residues 298 to 324 lie on the Extracellular side of the membrane; that stretch reads RGATLPGAWRGVVFYLKPNWQKLLETG. Residues 325 to 347 traverse the membrane as a helical segment; that stretch reads VWVDAAAQIFFSLGPGFGVLLAF. S336 contributes to the Na(+) binding site. The Cytoplasmic segment spans residues 348 to 360; it reads ASYNKFNNNCYQD. The chain crosses the membrane as a helical span at residues 361 to 380; that stretch reads ALVTSVVNCMTSFVSGFVIF. N368 provides a ligand contact to Na(+). Over 381–421 the chain is Extracellular; sequence TVLGYMAEMRNEDVSEVAKDAGPSLLFITYAEAIANMPAST. Residues 422-443 traverse the membrane as a helical segment; the sequence is FFAIIFFLMLITLGLDSTFAGL. Na(+) contacts are provided by L434, D437, and S438. Position 439 (T439) interacts with serotonin. The Cytoplasmic segment spans residues 444-463; sequence EGVITAVLDEFPHIWAKRRE. Residues 464–483 traverse the membrane as a helical segment; that stretch reads WFVLIVVITCILGSLLTLTS. The Extracellular portion of the chain corresponds to 484 to 494; sequence GGAYVVTLLEE. Serotonin contacts are provided by E494 and Y495. Residues 495-516 form a helical membrane-spanning segment; sequence YATGPAVLTVALIEAVVVSWFY. Topologically, residues 517–538 are cytoplasmic; sequence GITQFCSDVKEMLGFSPGWFWR. The helical transmembrane segment at 539–558 threads the bilayer; that stretch reads ICWVAISPLFLLFIICSFLM. F556 and S559 together coordinate serotonin. At 559–574 the chain is on the extracellular side; the sequence is SPPQLRLFQYNYPHWS. A helical membrane pass occupies residues 575–595; it reads IILGYCIGTSSVICIPIYIIY. The Cytoplasmic portion of the chain corresponds to 596–630; sequence RLISTPGTLKERIIKSITPETPTEIPCGDIRMNAV. The interaction with RAB4A stretch occupies residues 616–624; it reads TPTEIPCGD.

It belongs to the sodium:neurotransmitter symporter (SNF) (TC 2.A.22) family. SLC6A4 subfamily. In terms of assembly, monomer or homooligomer. Interacts (via C-terminus) with SCAMP2; the interaction is direct and retains transporter molecules intracellularly. Interacts with filamentous actin and STX1A. Interacts (via the N-terminus) with STX1A (via the H3 domain); this interaction regulates SLC4A6 channel conductance. Interacts with SEC23A, SEC24C and PATJ. Interacts with NOS1; the interaction may diminish the cell surface localization of SERT in the brain and, correspondingly, reduce serotonin reuptake. Interacts with TGFB1I1. Interacts with ITGAV:ITGB3. Interacts (via C-terminus) with ITGB3; this interaction regulates SLC6A4 trafficking. Phosphorylation at Thr-276 increases 5-HT uptake and is required for cGMP-mediated SERT regulation. As to expression, expressed in the lung, midbrain and brainstem regions. Expressed in brainstem raphe neurons.

The protein resides in the cell membrane. It is found in the endomembrane system. It localises to the endosome membrane. The protein localises to the synapse. Its subcellular location is the cell junction. The protein resides in the focal adhesion. It is found in the cell projection. It localises to the neuron projection. It catalyses the reaction serotonin(out) + K(+)(in) + Na(+)(out) + H(+)(in) = serotonin(in) + K(+)(out) + Na(+)(in) + H(+)(out). Functionally, serotonin transporter that cotransports serotonin with one Na(+) ion in exchange for one K(+) ion and possibly one proton in an overall electroneutral transport cycle. Transports serotonin across the plasma membrane from the extracellular compartment to the cytosol thus limiting serotonin intercellular signaling. Essential for serotonin homeostasis in the central nervous system. In the developing somatosensory cortex, acts in glutamatergic neurons to control serotonin uptake and its trophic functions accounting for proper spatial organization of cortical neurons and elaboration of sensory circuits. In the mature cortex, acts primarily in brainstem raphe neurons to mediate serotonin uptake from the synaptic cleft back into the pre-synaptic terminal thus terminating serotonin signaling at the synapse. Modulates mucosal serotonin levels in the gastrointestinal tract through uptake and clearance of serotonin in enterocytes. Required for enteric neurogenesis and gastrointestinal reflexes. Regulates blood serotonin levels by ensuring rapid high affinity uptake of serotonin from plasma to platelets, where it is further stored in dense granules via vesicular monoamine transporters and then released upon stimulation. Mechanistically, the transport cycle starts with an outward-open conformation having Na1(+) and Cl(-) sites occupied. The binding of a second extracellular Na2(+) ion and serotonin substrate leads to structural changes to outward-occluded to inward-occluded to inward-open, where the Na2(+) ion and serotonin are released into the cytosol. Binding of intracellular K(+) ion induces conformational transitions to inward-occluded to outward-open and completes the cycle by releasing K(+) possibly together with a proton bound to Asp-98 into the extracellular compartment. Na1(+) and Cl(-) ions remain bound throughout the transport cycle. Additionally, displays serotonin-induced channel-like conductance for monovalent cations, mainly Na(+) ions. The channel activity is uncoupled from the transport cycle and may contribute to the membrane resting potential or excitability. The protein is Sodium-dependent serotonin transporter of Mus musculus (Mouse).